The sequence spans 345 residues: tRNA N6-adenosine threonylcarbamoyltransferase (345 aa).

The Fe cation site is built by H111 and H115. Residues 134 to 138, D167, G180, D184, and N278 contribute to the substrate site; that span reads LVSGG. Residue D306 participates in Fe cation binding.

Belongs to the KAE1 / TsaD family. The cofactor is Fe(2+).

The protein resides in the cytoplasm. The catalysed reaction is L-threonylcarbamoyladenylate + adenosine(37) in tRNA = N(6)-L-threonylcarbamoyladenosine(37) in tRNA + AMP + H(+). In terms of biological role, required for the formation of a threonylcarbamoyl group on adenosine at position 37 (t(6)A37) in tRNAs that read codons beginning with adenine. Is involved in the transfer of the threonylcarbamoyl moiety of threonylcarbamoyl-AMP (TC-AMP) to the N6 group of A37, together with TsaE and TsaB. TsaD likely plays a direct catalytic role in this reaction. This Cyanothece sp. (strain PCC 7425 / ATCC 29141) protein is tRNA N6-adenosine threonylcarbamoyltransferase.